Reading from the N-terminus, the 252-residue chain is Carboxy-S-adenosyl-L-methionine synthase (252 aa).

S-adenosyl-L-methionine contacts are provided by residues tyrosine 45, 70 to 72 (GCS), 95 to 96 (DN), 123 to 124 (DI), asparagine 138, and arginine 205.

It belongs to the class I-like SAM-binding methyltransferase superfamily. Cx-SAM synthase family. In terms of assembly, homodimer.

The enzyme catalyses prephenate + S-adenosyl-L-methionine = carboxy-S-adenosyl-L-methionine + 3-phenylpyruvate + H2O. Catalyzes the conversion of S-adenosyl-L-methionine (SAM) to carboxy-S-adenosyl-L-methionine (Cx-SAM). This is Carboxy-S-adenosyl-L-methionine synthase from Photorhabdus laumondii subsp. laumondii (strain DSM 15139 / CIP 105565 / TT01) (Photorhabdus luminescens subsp. laumondii).